Here is a 192-residue protein sequence, read N- to C-terminus: Orotate phosphoribosyltransferase (192 aa).

5-phospho-alpha-D-ribose 1-diphosphate contacts are provided by residues Arg102, Lys103, Lys106, and Glu129–Ser137. Orotate contacts are provided by Thr133 and Arg161.

This sequence belongs to the purine/pyrimidine phosphoribosyltransferase family. PyrE subfamily. Homodimer. Mg(2+) is required as a cofactor.

The enzyme catalyses orotidine 5'-phosphate + diphosphate = orotate + 5-phospho-alpha-D-ribose 1-diphosphate. The protein operates within pyrimidine metabolism; UMP biosynthesis via de novo pathway; UMP from orotate: step 1/2. In terms of biological role, catalyzes the transfer of a ribosyl phosphate group from 5-phosphoribose 1-diphosphate to orotate, leading to the formation of orotidine monophosphate (OMP). The protein is Orotate phosphoribosyltransferase of Prochlorococcus marinus (strain SARG / CCMP1375 / SS120).